The primary structure comprises 430 residues: Alpha-(1-&gt;3)-arabinofuranosyltransferase (430 aa).

The next 10 helical transmembrane spans lie at 26–46 (APST…LSVI), 114–134 (WYIS…LRIF), 136–156 (YTLS…TESV), 160–180 (LVFT…FRWL), 194–214 (AIGL…LPVL), 218–238 (FYTL…AWPL), 276–296 (WLIL…LWLL), 307–327 (FWLL…LSLG), 352–372 (WPAW…LGHW), and 381–401 (YMKI…VLYF).

It belongs to the glycosyltransferase 87 family.

It is found in the cell membrane. The catalysed reaction is Adds an alpha-D-arabinofuranosyl group from trans,octacis-decaprenylphospho-beta-D-arabinofuranose at the 3-O-position of an alpha-(1-&gt;5)-arabinofuranan chain attached to a beta-(1-&gt;5)-galactofuranan chain.. It functions in the pathway cell wall biogenesis; cell wall polysaccharide biosynthesis. Functionally, involved in the biosynthesis of the arabinogalactan (AG) region of the mycolylarabinogalactan-peptidoglycan (mAGP) complex, an essential component of the mycobacterial cell wall. Catalyzes the addition of an arabinofuranosyl (Araf) residue from the sugar donor beta-D-arabinofuranosyl-1-monophosphoryldecaprenol (DPA) on the C-3 of an alpha-(1-&gt;5)-linked Araf from the arabinan backbone of AG. This Mycolicibacterium smegmatis (strain ATCC 700084 / mc(2)155) (Mycobacterium smegmatis) protein is Alpha-(1-&gt;3)-arabinofuranosyltransferase (aftC).